We begin with the raw amino-acid sequence, 184 residues long: Photosystem I assembly protein Ycf4 (184 aa).

Helical transmembrane passes span 19 to 39 (ISNLCWAFTLFLGSLGFVLVG) and 57 to 77 (IIFFPQGIVMSFYGIAGLFIS).

It belongs to the Ycf4 family.

Its subcellular location is the plastid thylakoid membrane. Seems to be required for the assembly of the photosystem I complex. In Cuscuta reflexa (Southern Asian dodder), this protein is Photosystem I assembly protein Ycf4.